Consider the following 392-residue polypeptide: Na(+)/H(+) antiporter NhaA (392 aa).

The next 11 helical transmembrane spans lie at 14-34 (AGGL…NSPL), 59-79 (LLLW…GLEV), 95-115 (IFPA…YLLF), 125-145 (GWAI…ALLG), 154-174 (VFLL…IALF), 179-199 (VSLQ…YMNW), 213-233 (LVLW…GVIV), 254-274 (GLHP…NAGV), 287-307 (LLPL…IFLF), 328-348 (IFAV…IASL), and 363-383 (LGIL…LRLA).

Belongs to the NhaA Na(+)/H(+) (TC 2.A.33) antiporter family.

It localises to the cell inner membrane. It carries out the reaction Na(+)(in) + 2 H(+)(out) = Na(+)(out) + 2 H(+)(in). Functionally, na(+)/H(+) antiporter that extrudes sodium in exchange for external protons. The protein is Na(+)/H(+) antiporter NhaA of Yersinia enterocolitica serotype O:8 / biotype 1B (strain NCTC 13174 / 8081).